The following is a 299-amino-acid chain: Non-structural protein V (299 aa).

The interval 41 to 99 is disordered; that stretch reads DNPGQERATCREEKAGSSGLSKPCLSAIGSTEGGAPRIRGQGPGESDDDAETLGIPPRN. Residues 110 to 120 are interaction with host STAT1; the sequence is YYVYDHSGEAV. Residues 134–145 show a composition bias toward low complexity; it reads GLDGDSTLSGGD. The disordered stretch occupies residues 134–162; that stretch reads GLDGDSTLSGGDNESENSDVDIGEPDTEG. Over residues 146–160 the composition is skewed to acidic residues; the sequence is NESENSDVDIGEPDT. Zn(2+) is bound by residues histidine 232, cysteine 251, cysteine 255, cysteine 267, cysteine 269, cysteine 272, cysteine 276, and cysteine 279.

This sequence belongs to the paramyxoviruses V protein family. Interacts with host IFIH1/MDA5 and DHX58/LGP2; these interactions are involved in the inhibition of the host type I interferon signaling pathway. Interacts with host TYK2; this interaction inhibits the type I interferon signaling pathway without affecting the type II pathway. Interacts with host IRF7; this interaction inhibits IRF7 translocation to the nucleus. Interacts with host CHUK. Interacts with host RELA/p65; this interaction inhibits the nuclear translocation of NF-KappaB. Interacts (via N-terminus) with host STAT1 and JAK1; these interactions inhibit STAT1 phosphorylation by Jak1 and thereby the type I interferon signaling pathway. Interacts (via C-terminus) with host STAT2; this interaction is involved in the inhibition of the host type I interferon signaling pathway. Forms a complex with host PPP1CA and PPP1CC; this interaction prevents dephosphorylation of host IFIH1/MDA5 and leads to the inhibition of the host type I interferon signaling pathway. Interacts with host IRF9; this interaction prevents the binding of IRF9 to STAT2 and thereby the type I interferon signaling pathway.

It is found in the host cytoplasm. Its function is as follows. Plays an essential role in the inhibition of host immune response. Prevents the establishment of cellular antiviral state by blocking interferon-alpha/beta (IFN-alpha/beta) production and signaling pathway. Interacts with host IFIH1/MDA5 and DHX58/LGP2 to inhibit the transduction pathway involved in the activation of IFN-beta promoter, thus protecting the virus against cell antiviral state. Blocks the type I interferon signaling pathway by interacting with host TYK2 and thereby inhibiting downstream STAT1 and STAT2 phosphorylation. Moderately affects the type II interferon signaling. The sequence is that of Non-structural protein V (P/V) from Measles virus (strain Edmonston-Schwarz vaccine) (MeV).